The primary structure comprises 206 residues: LexA repressor (206 aa).

The H-T-H motif DNA-binding region spans Arg-28 to Lys-48. Catalysis depends on for autocatalytic cleavage activity residues Ser-123 and Lys-160.

This sequence belongs to the peptidase S24 family. Homodimer.

The catalysed reaction is Hydrolysis of Ala-|-Gly bond in repressor LexA.. Its function is as follows. Represses a number of genes involved in the response to DNA damage (SOS response), including recA and lexA. In the presence of single-stranded DNA, RecA interacts with LexA causing an autocatalytic cleavage which disrupts the DNA-binding part of LexA, leading to derepression of the SOS regulon and eventually DNA repair. The sequence is that of LexA repressor from Shewanella putrefaciens (strain CN-32 / ATCC BAA-453).